The following is a 677-amino-acid chain: UvrABC system protein B (677 aa).

A Helicase ATP-binding domain is found at 31-417 (DRIESGETDI…SDGVVEQIIR (387 aa)). ATP is bound at residue 44–51 (GATGTGKS). A Beta-hairpin motif is present at residues 97-120 (YYDYYQPEAYVPKTDTFIEKDASV). Residues 434-596 (QIDDLLEEIR…VTPVPIKKTV (163 aa)) enclose the Helicase C-terminal domain. The UVR domain maps to 629–664 (KSHIKSLEAKMYMAAESLMFEEAAELRDEIQSLKEK).

Belongs to the UvrB family. As to quaternary structure, forms a heterotetramer with UvrA during the search for lesions. Interacts with UvrC in an incision complex.

It is found in the cytoplasm. Its function is as follows. The UvrABC repair system catalyzes the recognition and processing of DNA lesions. A damage recognition complex composed of 2 UvrA and 2 UvrB subunits scans DNA for abnormalities. Upon binding of the UvrA(2)B(2) complex to a putative damaged site, the DNA wraps around one UvrB monomer. DNA wrap is dependent on ATP binding by UvrB and probably causes local melting of the DNA helix, facilitating insertion of UvrB beta-hairpin between the DNA strands. Then UvrB probes one DNA strand for the presence of a lesion. If a lesion is found the UvrA subunits dissociate and the UvrB-DNA preincision complex is formed. This complex is subsequently bound by UvrC and the second UvrB is released. If no lesion is found, the DNA wraps around the other UvrB subunit that will check the other stand for damage. In Tropheryma whipplei (strain TW08/27) (Whipple's bacillus), this protein is UvrABC system protein B.